A 518-amino-acid polypeptide reads, in one-letter code: Trigger factor (518 aa).

In terms of domain architecture, PPIase FKBP-type spans 170–255 (GDVVVIDFVG…VKGLESPQEA (86 aa)). Residues 447–518 (EAPAKPAKKA…AKKAAAKKDA (72 aa)) are disordered. 2 stretches are compositionally biased toward basic residues: residues 452 to 468 (PAKK…KKAA) and 501 to 518 (PAAK…KKDA).

It belongs to the FKBP-type PPIase family. Tig subfamily.

Its subcellular location is the cytoplasm. It carries out the reaction [protein]-peptidylproline (omega=180) = [protein]-peptidylproline (omega=0). Involved in protein export. Acts as a chaperone by maintaining the newly synthesized protein in an open conformation. Functions as a peptidyl-prolyl cis-trans isomerase. The polypeptide is Trigger factor (Maricaulis maris (strain MCS10) (Caulobacter maris)).